The following is a 337-amino-acid chain: Trace amine-associated receptor 5 (337 aa).

Topologically, residues 1 to 38 are extracellular; the sequence is MRAVLLPGSGEQPAAFCYQVNGSCPRTVHPLAIRVLIY. N21 carries an N-linked (GlcNAc...) asparagine glycan. 2 disulfide bridges follow: C24–C188 and C99–C192. The helical transmembrane segment at 39-59 threads the bilayer; it reads LACAVGMLITVLGNLFVVFAV. The Cytoplasmic segment spans residues 60 to 70; the sequence is SYFKVLHTPTN. A helical membrane pass occupies residues 71–91; it reads FLLLSLALADMLLGLLVLPLS. Residues 92–109 lie on the Extracellular side of the membrane; that stretch reads TVRSVESCWFFGDFLCRL. Residues 110–130 traverse the membrane as a helical segment; sequence HTYLDTLFCLTSIFHLCFISI. Residues 131–154 lie on the Cytoplasmic side of the membrane; the sequence is DRHCAICDPLLYPSKFTVRIALRY. The chain crosses the membrane as a helical span at residues 155–175; it reads IAAGWGIPAAYTAFFLYTDVV. The tract at residues 176-189 is extracellular Loop 2 (ECL2); it reads ERALSQWLEEMPCV. Topologically, residues 176-204 are extracellular; sequence ERALSQWLEEMPCVGSCQLLFNKFWGWLN. The chain crosses the membrane as a helical span at residues 205-225; it reads FPAFFIPCLIMISLYLKIFVV. Residues 226-253 lie on the Cytoplasmic side of the membrane; it reads ATRQAQQIRTLSQSLSGAVKRERKAAKT. A helical membrane pass occupies residues 254-274; that stretch reads LGIAVGIYLVCWLPFTVDTLV. The Extracellular portion of the chain corresponds to 275-284; sequence DSLLNFVTPP. Residues 285 to 307 form a helical membrane-spanning segment; that stretch reads LVFDIFIWFAYFNSACNPIIYVF. At 308–337 the chain is on the cytoplasmic side; that stretch reads SYRWFRKALKLLLSREILSPRTQTADLFHD.

This sequence belongs to the G-protein coupled receptor 1 family.

The protein localises to the cell membrane. In terms of biological role, olfactory receptor specific for trimethylamine, a trace amine enriched in the urine of male rats, playing a role in social behavior. Also activated by N-methylpiperidine. Trimethylamine is present at high concentration in the urine of male after puberty and acts as an attractant. Trimethylamine-binding causes a conformation change that triggers signaling via G(s)-class of G alpha proteins (GNAL or GNAS). Also required to provide olfactory input into limbic brain areas to regulate emotional behaviors likely via modulation of the serotonin system. This chain is Trace amine-associated receptor 5, found in Rattus norvegicus (Rat).